A 474-amino-acid chain; its full sequence is 3-isopropylmalate dehydratase large subunit (474 aa).

The [4Fe-4S] cluster site is built by C353, C414, and C417.

It belongs to the aconitase/IPM isomerase family. LeuC type 1 subfamily. Heterodimer of LeuC and LeuD. It depends on [4Fe-4S] cluster as a cofactor.

The enzyme catalyses (2R,3S)-3-isopropylmalate = (2S)-2-isopropylmalate. It participates in amino-acid biosynthesis; L-leucine biosynthesis; L-leucine from 3-methyl-2-oxobutanoate: step 2/4. Its function is as follows. Catalyzes the isomerization between 2-isopropylmalate and 3-isopropylmalate, via the formation of 2-isopropylmaleate. The sequence is that of 3-isopropylmalate dehydratase large subunit from Xylella fastidiosa (strain M23).